The chain runs to 352 residues: Phospho-N-acetylmuramoyl-pentapeptide-transferase (352 aa).

10 helical membrane-spanning segments follow: residues 16–36 (YITF…LLFM), 66–86 (TPTM…LLCA), 88–108 (LNNL…LIGL), 129–149 (MLYL…FGME), 160–180 (PLLS…VATS), 191–211 (GLAT…VYIA), 228–248 (SGEA…FLWF), 255–275 (LFMG…MAII), 280–300 (FLLF…ILQI), and 329–349 (KIIV…LLTL).

Belongs to the glycosyltransferase 4 family. MraY subfamily. Mg(2+) serves as cofactor.

Its subcellular location is the cell inner membrane. It catalyses the reaction UDP-N-acetyl-alpha-D-muramoyl-L-alanyl-gamma-D-glutamyl-meso-2,6-diaminopimeloyl-D-alanyl-D-alanine + di-trans,octa-cis-undecaprenyl phosphate = di-trans,octa-cis-undecaprenyl diphospho-N-acetyl-alpha-D-muramoyl-L-alanyl-D-glutamyl-meso-2,6-diaminopimeloyl-D-alanyl-D-alanine + UMP. It participates in cell wall biogenesis; peptidoglycan biosynthesis. Its function is as follows. Catalyzes the initial step of the lipid cycle reactions in the biosynthesis of the cell wall peptidoglycan: transfers peptidoglycan precursor phospho-MurNAc-pentapeptide from UDP-MurNAc-pentapeptide onto the lipid carrier undecaprenyl phosphate, yielding undecaprenyl-pyrophosphoryl-MurNAc-pentapeptide, known as lipid I. The polypeptide is Phospho-N-acetylmuramoyl-pentapeptide-transferase (Wolinella succinogenes (strain ATCC 29543 / DSM 1740 / CCUG 13145 / JCM 31913 / LMG 7466 / NCTC 11488 / FDC 602W) (Vibrio succinogenes)).